Here is a 498-residue protein sequence, read N- to C-terminus: Cobyric acid synthase (498 aa).

Residues 257–447 (DLEIAVLRLP…LHGLLDNGPW (191 aa)) enclose the GATase cobBQ-type domain. Cys338 serves as the catalytic Nucleophile. The active site involves His439.

The protein belongs to the CobB/CobQ family. CobQ subfamily.

It functions in the pathway cofactor biosynthesis; adenosylcobalamin biosynthesis. Catalyzes amidations at positions B, D, E, and G on adenosylcobyrinic A,C-diamide. NH(2) groups are provided by glutamine, and one molecule of ATP is hydrogenolyzed for each amidation. This chain is Cobyric acid synthase, found in Synechococcus sp. (strain CC9605).